The following is a 308-amino-acid chain: Protein Bel-1 (308 aa).

A DNA-binding region spans residues 94–203 (SKSTCKRLIL…KGTRLPKRRC (110 aa)). The disordered stretch occupies residues 200-242 (KRRCNPSRRYETFREHPPTRKRRSKEGIPTDQQPSTSNGDPMA). Residues 207 to 217 (RRYETFREHPP) show a composition bias toward basic and acidic residues. Positions 217–226 (PTRKRRSKEG) match the Nuclear localization signal motif. The tract at residues 228-304 (PTDQQPSTSN…PLGSSEDQLL (77 aa)) is transactivation domain. A compositionally biased stretch (polar residues) spans 229 to 238 (TDQQPSTSNG).

In terms of assembly, homodimer or homomultimer. Forms complexes with the host nuclear factors NFIA, NFIB, NFIC or NFIX.

The protein resides in the host nucleus. In terms of biological role, transcriptional transactivator that activates the viral internal promoter (IP), thereby enhancing its own expression. This transactivation is repressed by nuclear factor I. Also transactivates the long terminal repeat (LTR) promoter, thereby inducing structural gene expression, initiating the late phase of infection. It is therefore a key regulator of viral gene expression. It directly binds to and activates DNA target sites of viral promoters and those of distinct cellular genes. Required for viral replication. This Simian foamy virus type 1 (SFVmac) protein is Protein Bel-1 (bel1).